The primary structure comprises 255 residues: 5-oxoprolinase subunit A (255 aa).

The protein belongs to the LamB/PxpA family. Forms a complex composed of PxpA, PxpB and PxpC.

The enzyme catalyses 5-oxo-L-proline + ATP + 2 H2O = L-glutamate + ADP + phosphate + H(+). Its function is as follows. Catalyzes the cleavage of 5-oxoproline to form L-glutamate coupled to the hydrolysis of ATP to ADP and inorganic phosphate. The protein is 5-oxoprolinase subunit A of Campylobacter jejuni subsp. jejuni serotype O:2 (strain ATCC 700819 / NCTC 11168).